A 318-amino-acid chain; its full sequence is Biotin synthase (318 aa).

The Radical SAM core domain occupies 36–258 (HDPREVQLCT…VATTRILFPD (223 aa)). The [4Fe-4S] cluster site is built by C54, C58, and C61. [2Fe-2S] cluster contacts are provided by C98, C130, C190, and R262.

The protein belongs to the radical SAM superfamily. Biotin synthase family. Homodimer. [4Fe-4S] cluster is required as a cofactor. [2Fe-2S] cluster serves as cofactor.

It catalyses the reaction (4R,5S)-dethiobiotin + (sulfur carrier)-SH + 2 reduced [2Fe-2S]-[ferredoxin] + 2 S-adenosyl-L-methionine = (sulfur carrier)-H + biotin + 2 5'-deoxyadenosine + 2 L-methionine + 2 oxidized [2Fe-2S]-[ferredoxin]. It functions in the pathway cofactor biosynthesis; biotin biosynthesis; biotin from 7,8-diaminononanoate: step 2/2. Its function is as follows. Catalyzes the conversion of dethiobiotin (DTB) to biotin by the insertion of a sulfur atom into dethiobiotin via a radical-based mechanism. This chain is Biotin synthase, found in Gloeobacter violaceus (strain ATCC 29082 / PCC 7421).